A 312-amino-acid polypeptide reads, in one-letter code: Acetaldehyde dehydrogenase 4 (312 aa).

Position 12-15 (12-15 (SGNI)) interacts with NAD(+). Residue cysteine 132 is the Acyl-thioester intermediate of the active site. NAD(+) contacts are provided by residues 163 to 171 (SAGPGTRAN) and asparagine 290.

Belongs to the acetaldehyde dehydrogenase family.

It carries out the reaction acetaldehyde + NAD(+) + CoA = acetyl-CoA + NADH + H(+). The chain is Acetaldehyde dehydrogenase 4 from Azotobacter vinelandii (strain DJ / ATCC BAA-1303).